Here is a 217-residue protein sequence, read N- to C-terminus: MAYAAVLLDIEGTVCPISFVKESLFPFFLKQVDTLCSSQDLQVQRLLTQFQVDDVAGHIRSLVARDVKDPILKQLQGLVWENGYKDGQIKAPVYDDAIKFIKNSDVPVYIYSSGSVKAQKLLFQYVESRSNTLDLRPFIKGYFDINTSGVKTQSESYARIANNVGIKPNGVLFISDNPFELDAAKITGMQTMLAVRPGNSEVRDALKYNPVTNFDDL.

The Mg(2+) site is built by D9 and E11. Residues 112 to 113 (SS) and K151 each bind substrate. D176 contacts Mg(2+).

This sequence belongs to the HAD-like hydrolase superfamily. MasA/MtnC family. In terms of assembly, monomer. Requires Mg(2+) as cofactor.

It is found in the cytoplasm. Its subcellular location is the nucleus. It catalyses the reaction 5-methylsulfanyl-2,3-dioxopentyl phosphate + H2O = 1,2-dihydroxy-5-(methylsulfanyl)pent-1-en-3-one + phosphate. Its pathway is amino-acid biosynthesis; L-methionine biosynthesis via salvage pathway; L-methionine from S-methyl-5-thio-alpha-D-ribose 1-phosphate: step 3/6. It participates in amino-acid biosynthesis; L-methionine biosynthesis via salvage pathway; L-methionine from S-methyl-5-thio-alpha-D-ribose 1-phosphate: step 4/6. In terms of biological role, bifunctional enzyme that catalyzes the enolization of 2,3-diketo-5-methylthiopentyl-1-phosphate (DK-MTP-1-P) into the intermediate 2-hydroxy-3-keto-5-methylthiopentenyl-1-phosphate (HK-MTPenyl-1-P), which is then dephosphorylated to form the acireductone 1,2-dihydroxy-3-keto-5-methylthiopentene (DHK-MTPene). The sequence is that of Enolase-phosphatase E1 from Lachancea thermotolerans (strain ATCC 56472 / CBS 6340 / NRRL Y-8284) (Yeast).